A 260-amino-acid chain; its full sequence is MIRAENITLIRTGRRLLDDVSVDLKPGKVNVIIGPNGAGKSTLMKVLSGEMRAEGGSVTYNNVALPQFTPVQLARMRAVLPQNTQLAFPFTALEIVRMGAVAQGSRAPEEQARRALARAGLRGFEQRSYNMLSGGEQQRVQFARALAQVPNSVENGEARALFLDEPTASLDIGHQISVLETARDFASGGGLVLAILHDLNLAAEFADQLIVMHGGRVTASGPSLDTISDETIARVYGIGGVVGRLPARHIPYVLPQSRHR.

The region spanning 2-239 is the ABC transporter domain; the sequence is IRAENITLIR…ETIARVYGIG (238 aa). An ATP-binding site is contributed by 34–41; it reads GPNGAGKS.

Belongs to the ABC transporter superfamily. Heme (hemin) importer (TC 3.A.1.14.5) family. The complex is composed of two ATP-binding proteins (HmuV), two transmembrane proteins (HmuU) and a solute-binding protein (HmuT).

The protein localises to the cell inner membrane. Part of the ABC transporter complex HmuTUV involved in hemin import. Responsible for energy coupling to the transport system. This chain is Hemin import ATP-binding protein HmuV, found in Agrobacterium fabrum (strain C58 / ATCC 33970) (Agrobacterium tumefaciens (strain C58)).